Here is a 96-residue protein sequence, read N- to C-terminus: MEVTDVRLRRVNTEGRMKAIASITLDNEFVVHDIRVIDGNNGLFVAMPSKRTPDGEFRDIAHPINSATRGKIQEAILAEYHRLGKLEEELEEAGAS.

Belongs to the SpoVG family.

Functionally, could be involved in septation. This is Putative septation protein SpoVG from Geobacillus sp. (strain WCH70).